A 448-amino-acid polypeptide reads, in one-letter code: Methylenetetrahydrofolate--tRNA-(uracil-5-)-methyltransferase TrmFO (448 aa).

Residue glycine 13–glycine 18 participates in FAD binding.

This sequence belongs to the MnmG family. TrmFO subfamily. It depends on FAD as a cofactor.

It localises to the cytoplasm. The catalysed reaction is uridine(54) in tRNA + (6R)-5,10-methylene-5,6,7,8-tetrahydrofolate + NADH + H(+) = 5-methyluridine(54) in tRNA + (6S)-5,6,7,8-tetrahydrofolate + NAD(+). It carries out the reaction uridine(54) in tRNA + (6R)-5,10-methylene-5,6,7,8-tetrahydrofolate + NADPH + H(+) = 5-methyluridine(54) in tRNA + (6S)-5,6,7,8-tetrahydrofolate + NADP(+). Catalyzes the folate-dependent formation of 5-methyl-uridine at position 54 (M-5-U54) in all tRNAs. The chain is Methylenetetrahydrofolate--tRNA-(uracil-5-)-methyltransferase TrmFO from Streptococcus pyogenes serotype M5 (strain Manfredo).